We begin with the raw amino-acid sequence, 217 residues long: Large ribosomal subunit protein bL25 (217 aa).

The segment at 187 to 217 (STPSGLEVEEETGEEESAEPEVIEKGKKEEE) is disordered. The span at 193-207 (EVEEETGEEESAEPE) shows a compositional bias: acidic residues. The span at 208 to 217 (VIEKGKKEEE) shows a compositional bias: basic and acidic residues.

This sequence belongs to the bacterial ribosomal protein bL25 family. CTC subfamily. Part of the 50S ribosomal subunit; part of the 5S rRNA/L5/L18/L25 subcomplex. Contacts the 5S rRNA. Binds to the 5S rRNA independently of L5 and L18.

Functionally, this is one of the proteins that binds to the 5S RNA in the ribosome where it forms part of the central protuberance. The protein is Large ribosomal subunit protein bL25 of Thermosipho africanus (strain TCF52B).